Consider the following 602-residue polypeptide: Protein NRT1/ PTR FAMILY 5.7 (602 aa).

Helical transmembrane passes span 56–73 (LSYF…TTIL) and 87–107 (WSGV…AYLG). T111 is subject to Phosphothreonine. Transmembrane regions (helical) follow at residues 112–132 (VLLA…SWFI), 152–172 (IAFF…KPSL), 197–217 (WWNA…VYIE), 220–240 (IGWG…FFIF), 337–357 (VKLL…GVCA), 381–401 (IVPP…TVTI), 422–442 (ILQR…IAAL), 465–485 (IWLA…LVGL), 500–520 (LGIA…NLLI), and 548–568 (FYWM…IVAM).

Belongs to the major facilitator superfamily. Proton-dependent oligopeptide transporter (POT/PTR) (TC 2.A.17) family. In terms of tissue distribution, expressed in shoots, stems, leaves and flowers.

Its subcellular location is the membrane. The protein is Protein NRT1/ PTR FAMILY 5.7 (NPF5.7) of Arabidopsis thaliana (Mouse-ear cress).